Consider the following 474-residue polypeptide: Crocetin glucosyltransferase, chloroplastic (474 aa).

Residues 1-45 (MVQQRHVLLITYPAQGHINPALQFAQRLLRMGIQVTLATSVYALS) constitute a chloroplast transit peptide. His-17 (proton acceptor) is an active-site residue. His-17 provides a ligand contact to an anthocyanidin. Positions 346, 361, 364, 365, 366, 369, 385, and 386 each coordinate UDP-alpha-D-glucose.

This sequence belongs to the UDP-glycosyltransferase family. Ubiquitous.

Its subcellular location is the plastid. It localises to the chloroplast. It carries out the reaction crocetin + UDP-alpha-D-glucose = beta-D-glucosyl crocetin + UDP. The catalysed reaction is beta-D-glucosyl crocetin + UDP-alpha-D-glucose = bis(beta-D-glucosyl) crocetin + UDP. The enzyme catalyses beta-D-gentiobiosyl crocetin + UDP-alpha-D-glucose = beta-D-gentiobiosyl beta-D-glucosyl crocetin + UDP. In terms of biological role, glucosyltransferase acting on a broad range of substrates, including crocetin, 4-coumaric acid, caffeic acid and ferulic acid. No activity with indol-3-acetic acid, bixin and norbixin, and no formation of O-glucosides. Involved with UGT94E5 in sequential glycosylation of crocetin to crocin (bis(beta-D-gentiobiosyl) crocetin). The polypeptide is Crocetin glucosyltransferase, chloroplastic (UGT75L6) (Gardenia jasminoides (Cape jasmine)).